The following is a 383-amino-acid chain: S-adenosylmethionine synthase (383 aa).

H15 is a binding site for ATP. Mg(2+) is bound at residue D17. E43 is a K(+) binding site. Residues E56 and Q99 each contribute to the L-methionine site. Residues 99–109 form a flexible loop region; that stretch reads QSPDINQGVDR. ATP is bound by residues 164 to 166, 230 to 231, D239, 245 to 246, A262, and K266; these read DAK, RF, and RK. D239 is a binding site for L-methionine. L-methionine is bound at residue K270.

It belongs to the AdoMet synthase family. As to quaternary structure, homotetramer; dimer of dimers. Mg(2+) serves as cofactor. The cofactor is K(+).

The protein localises to the cytoplasm. The catalysed reaction is L-methionine + ATP + H2O = S-adenosyl-L-methionine + phosphate + diphosphate. The protein operates within amino-acid biosynthesis; S-adenosyl-L-methionine biosynthesis; S-adenosyl-L-methionine from L-methionine: step 1/1. Its function is as follows. Catalyzes the formation of S-adenosylmethionine (AdoMet) from methionine and ATP. The overall synthetic reaction is composed of two sequential steps, AdoMet formation and the subsequent tripolyphosphate hydrolysis which occurs prior to release of AdoMet from the enzyme. This chain is S-adenosylmethionine synthase, found in Actinobacillus pleuropneumoniae serotype 7 (strain AP76).